Reading from the N-terminus, the 616-residue chain is Chaperone protein DnaK (616 aa).

Thr-175 is modified (phosphothreonine; by autocatalysis). Residues 579–616 (GGDPSQAGGFDPNAAGGAQQEPHDDNVVDADFKVDDDK) are disordered. Basic and acidic residues predominate over residues 599-616 (EPHDDNVVDADFKVDDDK).

This sequence belongs to the heat shock protein 70 family.

In terms of biological role, acts as a chaperone. This Clostridium botulinum (strain Eklund 17B / Type B) protein is Chaperone protein DnaK.